The following is a 1164-amino-acid chain: Receptor-like protein kinase BRI1-like 3 (1164 aa).

The signal sequence occupies residues 1–23 (MKQQWQFLILCLLVLFLTVDSRG). Topologically, residues 24–772 (RRLLSDDVND…RSHAHPKKQS (749 aa)) are extracellular. Residue Asn32 is glycosylated (N-linked (GlcNAc...) asparagine). Positions 65-72 (CTWRGVSC) match the Cys pair 1 motif. LRR repeat units lie at residues 77-98 (RVIGLDLRNGGLTGTLNLNNLT), 102-123 (NLRSLYLQGNNFSSGDSSSSSG), 125-146 (SLEVLDLSSNSLTDSSIVDYVF), 151-173 (NLVSVNFSHNKLAGKLKSSPSAS), 176-197 (RITTVDLSNNRFSDEIPETFIA), 202-224 (SLKHLDLSGNNVTGDFSRLSFGL), 227-248 (NLTVFSLSQNSISGDRFPVSLS), 252-274 (LLETLNLSRNSLIGKIPGDDYWG), 278-300 (NLRQLSLAHNLYSGEIPPELSLL), 303-325 (TLEVLDLSGNSLTGQLPQSFTSC), 327-347 (SLQSLNLGNNKLSGDFLSTVV), 352-375 (RITNLYLPFNNISGSVPISLTNCS), 376-397 (NLRVLDLSSNEFTGEVPSGFCS), 403-424 (VLEKLLIANNYLSGTVPVELGK), 427-448 (SLKTIDLSFNALTGLIPKEIWT), 451-473 (KLSDLVMWANNLTGGIPESICVD), 476-498 (NLETLILNNNLLTGSLPESISKC), 500-523 (NMLWISLSSNLLTGEIPVGIGKLE), 524-546 (KLAILQLGNNSLTGNIPSELGNC), and 548-570 (NLIWLDLNSNNLTGNLPGELASQ). Asn96 and Asn112 each carry an N-linked (GlcNAc...) asparagine glycan. Asn156 is a glycosylation site (N-linked (GlcNAc...) asparagine). Residues Asn212, Asn227, and Asn257 are each glycosylated (N-linked (GlcNAc...) asparagine). N-linked (GlcNAc...) asparagine glycans are attached at residues Asn362 and Asn373. N-linked (GlcNAc...) asparagine glycosylation occurs at Asn461. Asn532, Asn558, and Asn638 each carry an N-linked (GlcNAc...) asparagine glycan. LRR repeat units lie at residues 640–662 (SMIYLDLSYNAVSGSIPLGYGAM), 664–686 (YLQVLNLGHNLLTGTIPDSFGGL), 688–711 (AIGVLDLSHNDLQGFLPGSLGGLS), and 712–734 (FLSDLDVSNNNLTGPIPFGGQLT). Asn722 and Asn743 each carry an N-linked (GlcNAc...) asparagine glycan. The short motif at 748 to 755 (CGVPLPPC) is the Cys pair 2 element. Residues 773–793 (IATGMSAGIVFSFMCIVMLIM) traverse the membrane as a helical segment. Residues 794-1164 (ALYRARKVQK…LVEESRDKEP (371 aa)) lie on the Cytoplasmic side of the membrane. Phosphothreonine is present on residues Thr847 and Thr855. A Protein kinase domain is found at 858 to 1136 (FSADSMIGSG…QVMTMFKELV (279 aa)). ATP contacts are provided by residues 864–872 (IGSGGFGDV) and Lys886. Position 931 is a phosphotyrosine (Tyr931). Catalysis depends on Asp985, which acts as the Proton acceptor. Phosphoserine is present on Ser1020. Tyr1028 carries the phosphotyrosine modification.

This sequence belongs to the protein kinase superfamily. Ser/Thr protein kinase family. Post-translationally, autophosphorylated on Tyr and Thr residues. As to expression, predominantly expressed in vascular tissues. Expressed only during postembryonic development with a very discrete pattern of expression, preferentially in the two protophloem cell files at the elongation zone of the root. The expression in these two cell files attenuates as the phloem cells differentiate in the upper root. In cotyledons and leaves, it is expressed in phloem cells, starting at the cotyledons and shoot apex, moving toward the basal part of the leaves, where the expression is weak. Expressed in the secondary and tertiary veins and in the upper part of the cotyledons and leaves. Weakly or not expressed in the inflorescence stems. Has some complementary expression with BRL1.

The protein resides in the cell membrane. It catalyses the reaction L-seryl-[protein] + ATP = O-phospho-L-seryl-[protein] + ADP + H(+). The enzyme catalyses L-threonyl-[protein] + ATP = O-phospho-L-threonyl-[protein] + ADP + H(+). It carries out the reaction L-tyrosyl-[protein] + ATP = O-phospho-L-tyrosyl-[protein] + ADP + H(+). In terms of biological role, receptor with a dual specificity kinase activity acting on both serine/threonine- and tyrosine-containing substrates. Binds brassinolide. Regulates, in response to brassinosteroid binding, a signaling cascade involved in plant development. May be involved in cell growth and vascular differentiation. This chain is Receptor-like protein kinase BRI1-like 3 (BRL3), found in Arabidopsis thaliana (Mouse-ear cress).